The following is a 275-amino-acid chain: uncharacterized protein (275 aa).

The region spanning 171 to 268 (KMVCEFLEEH…GLTPKQYMKI (98 aa)) is the HTH araC/xylS-type domain. 2 DNA-binding regions (H-T-H motif) span residues 188-209 (NDLSELTGWSKYHLLRSFTKQK) and 235-258 (PIDAAFQTGFSDQSHMTKFFKRQV).

This is an uncharacterized protein from Bacillus subtilis (strain 168).